Consider the following 308-residue polypeptide: tRNA pseudouridine synthase B (308 aa).

Residue Asp44 is the Nucleophile of the active site.

The protein belongs to the pseudouridine synthase TruB family. Type 1 subfamily.

The catalysed reaction is uridine(55) in tRNA = pseudouridine(55) in tRNA. Functionally, responsible for synthesis of pseudouridine from uracil-55 in the psi GC loop of transfer RNAs. This Nitratidesulfovibrio vulgaris (strain DSM 19637 / Miyazaki F) (Desulfovibrio vulgaris) protein is tRNA pseudouridine synthase B.